The primary structure comprises 334 residues: Probable GTP 3',8-cyclase (334 aa).

The region spanning 24 to 256 (PYGRKVTGLR…RKKYIIDGVE (233 aa)) is the Radical SAM core domain. Residue R33 coordinates GTP. Residues C40 and C44 each contribute to the [4Fe-4S] cluster site. S-adenosyl-L-methionine is bound at residue Y46. C47 lines the [4Fe-4S] cluster pocket. K85 provides a ligand contact to GTP. Residue G89 coordinates S-adenosyl-L-methionine. Residue T113 coordinates GTP. S137 is a binding site for S-adenosyl-L-methionine. GTP is bound at residue K176. [4Fe-4S] cluster is bound by residues C269 and C272. Position 274-276 (274-276 (RLR)) interacts with GTP. C286 contacts [4Fe-4S] cluster.

The protein belongs to the radical SAM superfamily. MoaA family. [4Fe-4S] cluster serves as cofactor.

It carries out the reaction GTP + AH2 + S-adenosyl-L-methionine = (8S)-3',8-cyclo-7,8-dihydroguanosine 5'-triphosphate + 5'-deoxyadenosine + L-methionine + A + H(+). The protein operates within cofactor biosynthesis; molybdopterin biosynthesis. In terms of biological role, catalyzes the cyclization of GTP to (8S)-3',8-cyclo-7,8-dihydroguanosine 5'-triphosphate. In Methanosarcina acetivorans (strain ATCC 35395 / DSM 2834 / JCM 12185 / C2A), this protein is Probable GTP 3',8-cyclase.